The following is a 210-amino-acid chain: Mating-type-like protein ALPHA2, silenced copy at MTL3 (210 aa).

The segment at residues 108–170 (ASYRGHRFTR…NRRRKQKSIY (63 aa)) is a DNA-binding region (homeobox; TALE-type).

It belongs to the TALE/M-ATYP homeobox family.

It is found in the nucleus. Mating type proteins are sequence specific DNA-binding proteins that act as master switches in yeast differentiation by controlling gene expression in a cell type-specific fashion. This Candida glabrata (strain ATCC 2001 / BCRC 20586 / JCM 3761 / NBRC 0622 / NRRL Y-65 / CBS 138) (Yeast) protein is Mating-type-like protein ALPHA2, silenced copy at MTL3 (MTL3alpha2).